Consider the following 631-residue polypeptide: 1-deoxy-D-xylulose-5-phosphate synthase (631 aa).

Thiamine diphosphate contacts are provided by residues H73, 113-115, N174, Y285, and E367; that span reads SHA. N174 contacts Mg(2+).

The protein belongs to the transketolase family. DXPS subfamily. In terms of assembly, homodimer. Mg(2+) is required as a cofactor. Thiamine diphosphate serves as cofactor.

The catalysed reaction is D-glyceraldehyde 3-phosphate + pyruvate + H(+) = 1-deoxy-D-xylulose 5-phosphate + CO2. It functions in the pathway metabolic intermediate biosynthesis; 1-deoxy-D-xylulose 5-phosphate biosynthesis; 1-deoxy-D-xylulose 5-phosphate from D-glyceraldehyde 3-phosphate and pyruvate: step 1/1. Catalyzes the acyloin condensation reaction between C atoms 2 and 3 of pyruvate and glyceraldehyde 3-phosphate to yield 1-deoxy-D-xylulose-5-phosphate (DXP). This is 1-deoxy-D-xylulose-5-phosphate synthase from Streptomyces sp. (strain CL190).